Consider the following 391-residue polypeptide: MKEFEFLKAELDKMKENKTWQQMKQIETKQGPSVEVKGENVIQLSSNNYLGLTSHPRLVEAAKRAAEEFGAGTGSVRTIAGTFTMHNELEKKLANFKKTEAALVFQSGFTTNQGVLSSILTKEDIVISDELNHASIIDGIRLTKADKKVYRHVDMDDLERVLKKSMNYRMRLIVTDGVFSMDGNIAPLPDIVKLAEAYDAFVMVDDAHASGVLGKNGRGTVNHFGLDGRVHIQVGTLSKAIGVLGGYAAGSQVLIDYLRHKGRPFLFSTSHPPAVTAACIEAIDVLLEEPEHMEKLWENTAYFKDKLVQMGLTLTKSETPIVPILIGEEEKAQALSDLLLTRGVFAQSIVYPTVAQGKARIRTIITAEHTNEELDRALEVIRSAAKELQLV.

Residue glycine 108 to phenylalanine 109 coordinates pyridoxal 5'-phosphate. Residue histidine 133 participates in substrate binding. Pyridoxal 5'-phosphate-binding positions include serine 180, aspartate 205–histidine 208, and threonine 236–lysine 239. Lysine 239 carries the N6-(pyridoxal phosphate)lysine modification. Threonine 353 contributes to the substrate binding site.

It belongs to the class-II pyridoxal-phosphate-dependent aminotransferase family. BioF subfamily. In terms of assembly, homodimer. Requires pyridoxal 5'-phosphate as cofactor.

It catalyses the reaction 6-carboxyhexanoyl-[ACP] + L-alanine + H(+) = (8S)-8-amino-7-oxononanoate + holo-[ACP] + CO2. The protein operates within cofactor biosynthesis; biotin biosynthesis. Functionally, catalyzes the decarboxylative condensation of pimeloyl-[acyl-carrier protein] and L-alanine to produce 8-amino-7-oxononanoate (AON), [acyl-carrier protein], and carbon dioxide. The sequence is that of 8-amino-7-oxononanoate synthase 1 from Bacillus velezensis (strain DSM 23117 / BGSC 10A6 / LMG 26770 / FZB42) (Bacillus amyloliquefaciens subsp. plantarum).